Reading from the N-terminus, the 394-residue chain is Uroporphyrinogen decarboxylase 2, chloroplastic (394 aa).

Residues 74 to 78 (RQAGR), phenylalanine 93, serine 123, aspartate 124, tyrosine 201, serine 256, and histidine 371 each bind substrate.

This sequence belongs to the uroporphyrinogen decarboxylase family. Homodimer.

Its subcellular location is the plastid. The protein localises to the chloroplast. It carries out the reaction uroporphyrinogen III + 4 H(+) = coproporphyrinogen III + 4 CO2. It participates in porphyrin-containing compound metabolism; protoporphyrin-IX biosynthesis; coproporphyrinogen-III from 5-aminolevulinate: step 4/4. It functions in the pathway porphyrin-containing compound metabolism; chlorophyll biosynthesis. Functionally, catalyzes the decarboxylation of four acetate groups of uroporphyrinogen-III to yield coproporphyrinogen-III. The chain is Uroporphyrinogen decarboxylase 2, chloroplastic (HEME2) from Arabidopsis thaliana (Mouse-ear cress).